We begin with the raw amino-acid sequence, 312 residues long: UDP-N-acetylenolpyruvoylglucosamine reductase (312 aa).

The FAD-binding PCMH-type domain occupies R33–G199. The active site involves R178. The active-site Proton donor is S229. E299 is an active-site residue.

It belongs to the MurB family. FAD serves as cofactor.

It localises to the cytoplasm. The catalysed reaction is UDP-N-acetyl-alpha-D-muramate + NADP(+) = UDP-N-acetyl-3-O-(1-carboxyvinyl)-alpha-D-glucosamine + NADPH + H(+). It functions in the pathway cell wall biogenesis; peptidoglycan biosynthesis. In terms of biological role, cell wall formation. This chain is UDP-N-acetylenolpyruvoylglucosamine reductase, found in Synechococcus sp. (strain JA-3-3Ab) (Cyanobacteria bacterium Yellowstone A-Prime).